The following is a 49-amino-acid chain: Large ribosomal subunit protein bL33C (49 aa).

The disordered stretch occupies residues 20–49 (NKNKRNNPDRLEKQKYCPRERKVTLHRETK). Positions 25–49 (NNPDRLEKQKYCPRERKVTLHRETK) are enriched in basic and acidic residues.

The protein belongs to the bacterial ribosomal protein bL33 family.

This Enterococcus faecalis (strain ATCC 700802 / V583) protein is Large ribosomal subunit protein bL33C (rpmG3).